The following is a 486-amino-acid chain: Keratin, type II cuticular Hb6 (486 aa).

The segment at 1-106 (MTCGSYCGGR…PNAQCVKHEE (106 aa)) is head. In terms of domain architecture, IF rod spans 106-417 (EKEQIKCLNS…RLLEGEEQRL (312 aa)). The interval 107 to 141 (KEQIKCLNSKFAAFIDKVRFLEQQNKLLETKWQFY) is coil 1A. The tract at residues 142–151 (QNRKCCESNM) is linker 1. Positions 152 to 252 (EPLFEGYIEA…YDEETRILHS (101 aa)) are coil 1B. Lys-212 participates in a covalent cross-link: Glycyl lysine isopeptide (Lys-Gly) (interchain with G-Cter in SUMO1). The segment at 253 to 269 (HISDTSIVVKMDNSRDL) is linker 12. A coil 2 region spans residues 270-413 (NMDCVVAEIK…TTYRRLLEGE (144 aa)). The interval 414–486 (EQRLCEGVGS…GACSGGCKKC (73 aa)) is tail.

It belongs to the intermediate filament family. Heterotetramer of two type I and two type II keratins.

This Mus musculus (Mouse) protein is Keratin, type II cuticular Hb6 (Krt86).